The primary structure comprises 429 residues: 3-phosphoshikimate 1-carboxyvinyltransferase (429 aa).

Residues Lys23, Ser24, and Arg28 each coordinate 3-phosphoshikimate. Phosphoenolpyruvate is bound at residue Lys23. Phosphoenolpyruvate contacts are provided by Gly97 and Arg125. Residues Ser170, Ser171, Gln172, Ser198, Asp314, Asn338, and Lys342 each coordinate 3-phosphoshikimate. Gln172 serves as a coordination point for phosphoenolpyruvate. Residue Asp314 is the Proton acceptor of the active site. Residues Arg346, Arg388, and Lys413 each coordinate phosphoenolpyruvate.

Belongs to the EPSP synthase family. Monomer.

The protein resides in the cytoplasm. It catalyses the reaction 3-phosphoshikimate + phosphoenolpyruvate = 5-O-(1-carboxyvinyl)-3-phosphoshikimate + phosphate. Its pathway is metabolic intermediate biosynthesis; chorismate biosynthesis; chorismate from D-erythrose 4-phosphate and phosphoenolpyruvate: step 6/7. Functionally, catalyzes the transfer of the enolpyruvyl moiety of phosphoenolpyruvate (PEP) to the 5-hydroxyl of shikimate-3-phosphate (S3P) to produce enolpyruvyl shikimate-3-phosphate and inorganic phosphate. The chain is 3-phosphoshikimate 1-carboxyvinyltransferase from Pectobacterium carotovorum subsp. carotovorum (strain PC1).